The chain runs to 584 residues: Zinc finger and BTB domain-containing protein 7A (584 aa).

Residues Cys34 to Thr101 form the BTB domain. The interval Tyr220–Gly313 is disordered. The tract at residues Glu277 to Ala584 is mediates interaction with KHDRBS1. Residues Ala281 to Pro290 are compositionally biased toward low complexity. Phosphoserine occurs at positions 337 and 341. Residues Met349–Ala584 form a mediates interaction with RELA region. The mediates interaction with SMAD4 stretch occupies residues Arg377–Ala584. 2 C2H2-type zinc fingers span residues Gln382–His404 and Tyr410–His432. Lys436 participates in a covalent cross-link: Glycyl lysine isopeptide (Lys-Gly) (interchain with G-Cter in SUMO2). The C2H2-type 3 zinc finger occupies Tyr438–His460. The C2H2-type 4; atypical zinc-finger motif lies at Tyr466–Cys490. Residues Lys486–Ala584 form a disordered region. Residues Gly505–Pro527 show a composition bias toward low complexity. 3 positions are modified to phosphoserine: Ser511, Ser525, and Ser526. The segment covering Asp528–Asp540 has biased composition (basic and acidic residues). Lys539 participates in a covalent cross-link: Glycyl lysine isopeptide (Lys-Gly) (interchain with G-Cter in SUMO2). A Phosphoserine modification is found at Ser549. Over residues Gly560–Gly572 the composition is skewed to gly residues.

In terms of assembly, homodimer. Interacts with BCL6. Interacts with RELA; involved in the control by RELA of the accessibility of target gene promoters. Interacts with AR (via NR LBD domain); the interaction is direct and androgen-dependent. Interacts with NCOR1. Interacts with NCOR2. Interacts with SMAD4; the interaction is direct and stimulated by TGFB1. Interacts with HDAC1. Interacts with SP1; ZBTB7A prevents the binding to GC-rich motifs in promoters and represses the transcriptional activity of SP1. Interacts with the DNA-dependent protein kinase complex/DNA-PKc. Interacts with KHDRBS1; negatively regulates KHDRBS1 splicing activity. Post-translationally, sumoylated. Undergoes sumoylation with SUMO1 that may regulate its transcriptional activity. Widely expressed. In normal thymus, expressed in medullary epithelial cells and Hassle's corpuscles (at protein level). In tonsil, expressed in squamous epithelium and germinal center lymphocytes (at protein level). Up-regulated in a subset of lymphomas, as well as in a subset of breast, lung, colon, prostate and bladder carcinomas (at protein level). Expressed in adipose tissues.

It is found in the nucleus. Transcription factor that represses the transcription of a wide range of genes involved in cell proliferation and differentiation. Directly and specifically binds to the consensus sequence 5'-[GA][CA]GACCCCCCCCC-3' and represses transcription both by regulating the organization of chromatin and through the direct recruitment of transcription factors to gene regulatory regions. Negatively regulates SMAD4 transcriptional activity in the TGF-beta signaling pathway through these two mechanisms. That is, recruits the chromatin regulator HDAC1 to the SMAD4-DNA complex and in parallel prevents the recruitment of the transcriptional activators CREBBP and EP300. Collaborates with transcription factors like RELA to modify the accessibility of gene transcription regulatory regions to secondary transcription factors. Also directly interacts with transcription factors like SP1 to prevent their binding to DNA. Functions as an androgen receptor/AR transcriptional corepressor by recruiting NCOR1 and NCOR2 to the androgen response elements/ARE on target genes. Thereby, negatively regulates androgen receptor signaling and androgen-induced cell proliferation. Involved in the switch between fetal and adult globin expression during erythroid cells maturation. Through its interaction with the NuRD complex regulates chromatin at the fetal globin genes to repress their transcription. Specifically represses the transcription of the tumor suppressor ARF isoform from the CDKN2A gene. Efficiently abrogates E2F1-dependent CDKN2A transactivation. Regulates chondrogenesis through the transcriptional repression of specific genes via a mechanism that also requires histone deacetylation. Regulates cell proliferation through the transcriptional regulation of genes involved in glycolysis. Involved in adipogenesis through the regulation of genes involved in adipocyte differentiation. Plays a key role in the differentiation of lymphoid progenitors into B and T lineages. Promotes differentiation towards the B lineage by inhibiting the T-cell instructive Notch signaling pathway through the specific transcriptional repression of Notch downstream target genes. Also regulates osteoclast differentiation. May also play a role, independently of its transcriptional activity, in double-strand break repair via classical non-homologous end joining/cNHEJ. Recruited to double-strand break sites on damage DNA, interacts with the DNA-dependent protein kinase complex and directly regulates its stability and activity in DNA repair. May also modulate the splicing activity of KHDRBS1 toward BCL2L1 in a mechanism which is histone deacetylase-dependent and thereby negatively regulates the pro-apoptotic effect of KHDRBS1. This is Zinc finger and BTB domain-containing protein 7A from Homo sapiens (Human).